The following is a 477-amino-acid chain: Ribulose bisphosphate carboxylase large chain (477 aa).

Positions Met-1–Ser-2 are excised as a propeptide. Pro-3 bears the N-acetylproline mark. Lys-14 carries the N6,N6,N6-trimethyllysine modification. Substrate is bound by residues Asn-123 and Thr-173. Residue Lys-175 is the Proton acceptor of the active site. Lys-177 is a binding site for substrate. Mg(2+)-binding residues include Lys-201, Asp-203, and Glu-204. Position 201 is an N6-carboxylysine (Lys-201). His-294 functions as the Proton acceptor in the catalytic mechanism. Substrate is bound by residues Arg-295, His-327, and Ser-379.

This sequence belongs to the RuBisCO large chain family. Type I subfamily. Heterohexadecamer of 8 large chains and 8 small chains; disulfide-linked. The disulfide link is formed within the large subunit homodimers. Mg(2+) serves as cofactor. In terms of processing, the disulfide bond which can form in the large chain dimeric partners within the hexadecamer appears to be associated with oxidative stress and protein turnover.

It is found in the plastid. The protein localises to the chloroplast. The enzyme catalyses 2 (2R)-3-phosphoglycerate + 2 H(+) = D-ribulose 1,5-bisphosphate + CO2 + H2O. The catalysed reaction is D-ribulose 1,5-bisphosphate + O2 = 2-phosphoglycolate + (2R)-3-phosphoglycerate + 2 H(+). Its function is as follows. RuBisCO catalyzes two reactions: the carboxylation of D-ribulose 1,5-bisphosphate, the primary event in carbon dioxide fixation, as well as the oxidative fragmentation of the pentose substrate in the photorespiration process. Both reactions occur simultaneously and in competition at the same active site. The polypeptide is Ribulose bisphosphate carboxylase large chain (Carthamus tinctorius (Safflower)).